A 268-amino-acid chain; its full sequence is 4-hydroxy-tetrahydrodipicolinate reductase (268 aa).

Residues Gly10–Met15, Asp36, Gly99–Thr101, and Ala123–Met126 each bind NAD(+). Catalysis depends on His156, which acts as the Proton donor/acceptor. His157 contributes to the (S)-2,3,4,5-tetrahydrodipicolinate binding site. The Proton donor role is filled by Lys160. Gly166–Thr167 provides a ligand contact to (S)-2,3,4,5-tetrahydrodipicolinate.

The protein belongs to the DapB family.

It localises to the cytoplasm. It carries out the reaction (S)-2,3,4,5-tetrahydrodipicolinate + NAD(+) + H2O = (2S,4S)-4-hydroxy-2,3,4,5-tetrahydrodipicolinate + NADH + H(+). It catalyses the reaction (S)-2,3,4,5-tetrahydrodipicolinate + NADP(+) + H2O = (2S,4S)-4-hydroxy-2,3,4,5-tetrahydrodipicolinate + NADPH + H(+). It participates in amino-acid biosynthesis; L-lysine biosynthesis via DAP pathway; (S)-tetrahydrodipicolinate from L-aspartate: step 4/4. Its function is as follows. Catalyzes the conversion of 4-hydroxy-tetrahydrodipicolinate (HTPA) to tetrahydrodipicolinate. This chain is 4-hydroxy-tetrahydrodipicolinate reductase, found in Dechloromonas aromatica (strain RCB).